The following is a 203-amino-acid chain: Probable GTP-binding protein EngB (203 aa).

An EngB-type G domain is found at 24–199 (DGSEVAFAGR…HTVIETWLGL (176 aa)). Residues 32-39 (GRSNAGKS), 59-63 (GRTQQ), 77-80 (DLPG), 144-147 (TKAD), and 178-180 (FSS) contribute to the GTP site. Ser-39 and Thr-61 together coordinate Mg(2+).

This sequence belongs to the TRAFAC class TrmE-Era-EngA-EngB-Septin-like GTPase superfamily. EngB GTPase family. The cofactor is Mg(2+).

Necessary for normal cell division and for the maintenance of normal septation. The polypeptide is Probable GTP-binding protein EngB (Xylella fastidiosa (strain 9a5c)).